Reading from the N-terminus, the 147-residue chain is Large ribosomal subunit protein bL9 (147 aa).

It belongs to the bacterial ribosomal protein bL9 family.

Functionally, binds to the 23S rRNA. This Marinomonas sp. (strain MWYL1) protein is Large ribosomal subunit protein bL9.